Reading from the N-terminus, the 206-residue chain is Translation initiation factor IF-3 (206 aa).

The protein belongs to the IF-3 family. In terms of assembly, monomer.

It is found in the cytoplasm. IF-3 binds to the 30S ribosomal subunit and shifts the equilibrium between 70S ribosomes and their 50S and 30S subunits in favor of the free subunits, thus enhancing the availability of 30S subunits on which protein synthesis initiation begins. The sequence is that of Translation initiation factor IF-3 from Chlorobium luteolum (strain DSM 273 / BCRC 81028 / 2530) (Pelodictyon luteolum).